The chain runs to 233 residues: Ribosome maturation factor RimP (233 aa).

Over residues 167–179 the composition is skewed to basic and acidic residues; that stretch reads RGKAAEREKKRDL. The tract at residues 167–233 is disordered; that stretch reads RGKAAEREKK…RARRGEIDPD (67 aa). The span at 187 to 196 shows a compositional bias: low complexity; sequence PHAKPAAQAK. Residues 220–233 show a composition bias toward basic and acidic residues; that stretch reads LAADRARRGEIDPD.

This sequence belongs to the RimP family.

It localises to the cytoplasm. Its function is as follows. Required for maturation of 30S ribosomal subunits. This Bradyrhizobium sp. (strain ORS 278) protein is Ribosome maturation factor RimP.